A 449-amino-acid chain; its full sequence is FAD-linked oxidoreductase janO (449 aa).

The 172-residue stretch at 32–203 (PDAQPLAIIK…TRFHLNTRPL (172 aa)) folds into the FAD-binding PCMH-type domain.

It belongs to the oxygen-dependent FAD-linked oxidoreductase family. FAD serves as cofactor.

It functions in the pathway secondary metabolite biosynthesis. Functionally, FAD-linked oxidoreductase; part of the gene cluster that mediates the biosynthesis of the indole diterpenes janthitremanes such as shearinine K or shearinine A. The geranylgeranyl diphosphate (GGPP) synthase janG catalyzes the first step in janthitremane biosynthesis via conversion of farnesyl pyrophosphate and isopentyl pyrophosphate into geranylgeranyl pyrophosphate (GGPP). Condensation of indole-3-glycerol phosphate with GGPP by the prenyl transferase janC then forms 3-geranylgeranylindole (3-GGI). Epoxidation by the FAD-dependent monooxygenase janM leads to a epoxidized-GGI that is substrate of the terpene cyclase janB for cyclization to yield paspaline. Paspaline is subsequently converted to 13-desoxypaspaline by the cytochrome P450 monooxygenase janP, via beta-PC-M6 in a series of alpha-face oxidations. The cytochrome P450 monooxygenase janQ is proposed to carry out sequential beta-face oxidation steps at C-7 and C-13 of 13-desoxypaspaline to form paspalicine and paspalinine respectively. The indole diterpene prenyltransferase janD may then convert paspalinine into shearinine K which is substrate of janO and/or additional enzymes for oxidation and cyclization to generate shearinine A. The polypeptide is FAD-linked oxidoreductase janO (Penicillium janthinellum (Penicillium vitale)).